Here is a 199-residue protein sequence, read N- to C-terminus: N-(5'-phosphoribosyl)anthranilate isomerase (199 aa).

It belongs to the TrpF family.

The catalysed reaction is N-(5-phospho-beta-D-ribosyl)anthranilate = 1-(2-carboxyphenylamino)-1-deoxy-D-ribulose 5-phosphate. It functions in the pathway amino-acid biosynthesis; L-tryptophan biosynthesis; L-tryptophan from chorismate: step 3/5. The protein is N-(5'-phosphoribosyl)anthranilate isomerase of Streptococcus pneumoniae serotype 4 (strain ATCC BAA-334 / TIGR4).